A 157-amino-acid chain; its full sequence is Small ribosomal subunit protein uS7 (157 aa).

Belongs to the universal ribosomal protein uS7 family. As to quaternary structure, part of the 30S ribosomal subunit. Contacts proteins S9 and S11.

In terms of biological role, one of the primary rRNA binding proteins, it binds directly to 16S rRNA where it nucleates assembly of the head domain of the 30S subunit. Is located at the subunit interface close to the decoding center, probably blocks exit of the E-site tRNA. This chain is Small ribosomal subunit protein uS7, found in Stenotrophomonas maltophilia (strain R551-3).